Consider the following 147-residue polypeptide: Diaminohydroxyphosphoribosylamino-pyrimidine deaminase (147 aa).

One can recognise a CMP/dCMP-type deaminase domain in the interval 1 to 122 (MKDRFYMTRA…LYLRKKGISV (122 aa)). Residue H50 coordinates Zn(2+). The Proton donor role is filled by E52. Zn(2+) is bound by residues C75 and C84.

The protein belongs to the cytidine and deoxycytidylate deaminase family. It depends on Zn(2+) as a cofactor.

It catalyses the reaction 2,5-diamino-6-hydroxy-4-(5-phosphoribosylamino)-pyrimidine + H2O + H(+) = 5-amino-6-(5-phospho-D-ribosylamino)uracil + NH4(+). Its pathway is cofactor biosynthesis; riboflavin biosynthesis; 5-amino-6-(D-ribitylamino)uracil from GTP: step 2/4. The protein is Diaminohydroxyphosphoribosylamino-pyrimidine deaminase (ribD1) of Buchnera aphidicola subsp. Schizaphis graminum (strain Sg).